A 102-amino-acid chain; its full sequence is Monothiol glutaredoxin-S4 (102 aa).

The Glutaredoxin domain occupies 1-101; the sequence is MDKLQKMISE…PMLKRVGALW (101 aa). Residue cysteine 21 coordinates [2Fe-2S] cluster. The Responsive for interaction with TGA factors motif lies at 99 to 102; the sequence is ALWL.

This sequence belongs to the glutaredoxin family. CC-type subfamily.

The protein localises to the cytoplasm. The protein resides in the nucleus. May only reduce GSH-thiol disulfides, but not protein disulfides. This chain is Monothiol glutaredoxin-S4 (GRXS4), found in Arabidopsis thaliana (Mouse-ear cress).